The primary structure comprises 307 residues: Methionyl-tRNA formyltransferase (307 aa).

Position 109 to 112 (109 to 112 (SLLP)) interacts with (6S)-5,6,7,8-tetrahydrofolate.

The protein belongs to the Fmt family.

It catalyses the reaction L-methionyl-tRNA(fMet) + (6R)-10-formyltetrahydrofolate = N-formyl-L-methionyl-tRNA(fMet) + (6S)-5,6,7,8-tetrahydrofolate + H(+). Functionally, attaches a formyl group to the free amino group of methionyl-tRNA(fMet). The formyl group appears to play a dual role in the initiator identity of N-formylmethionyl-tRNA by promoting its recognition by IF2 and preventing the misappropriation of this tRNA by the elongation apparatus. In Dechloromonas aromatica (strain RCB), this protein is Methionyl-tRNA formyltransferase.